A 273-amino-acid polypeptide reads, in one-letter code: Putative pyruvate, phosphate dikinase regulatory protein 2 (273 aa).

An ADP-binding site is contributed by 151–158; that stretch reads GVSRTSKT.

It belongs to the pyruvate, phosphate/water dikinase regulatory protein family. PDRP subfamily.

The catalysed reaction is N(tele)-phospho-L-histidyl/L-threonyl-[pyruvate, phosphate dikinase] + ADP = N(tele)-phospho-L-histidyl/O-phospho-L-threonyl-[pyruvate, phosphate dikinase] + AMP + H(+). The enzyme catalyses N(tele)-phospho-L-histidyl/O-phospho-L-threonyl-[pyruvate, phosphate dikinase] + phosphate + H(+) = N(tele)-phospho-L-histidyl/L-threonyl-[pyruvate, phosphate dikinase] + diphosphate. Its function is as follows. Bifunctional serine/threonine kinase and phosphorylase involved in the regulation of the pyruvate, phosphate dikinase (PPDK) by catalyzing its phosphorylation/dephosphorylation. This Syntrophomonas wolfei subsp. wolfei (strain DSM 2245B / Goettingen) protein is Putative pyruvate, phosphate dikinase regulatory protein 2.